The chain runs to 1975 residues: Cadherin-87A (1975 aa).

The signal sequence occupies residues 1-17; sequence MKLPLGLLMICLGLTLA. Residues 18-1775 lie on the Extracellular side of the membrane; sequence KGETNLPPVF…AIVQDEFDLA (1758 aa). Cadherin domains lie at 28–132, 133–245, 246–358, 359–472, 473–669, 670–774, 775–878, 879–998, 999–1103, 1104–1211, 1212–1318, 1319–1431, 1432–1553, and 1554–1677; these read TQTL…PPEF, QNTP…PPVF, QGSL…PPVF, NHKE…KPVF, EQES…PPVC, ESPL…VPNF, EQQS…DPYF, VPAT…PPRF, NAPW…DPKF, SQSD…APVF, TRDV…KPEF, VIPA…RPEF, PDAS…PPVF, and EKPI…PPEE. N-linked (GlcNAc...) asparagine glycosylation is found at Asn39, Asn77, and Asn203. N-linked (GlcNAc...) asparagine glycosylation is present at Asn424. Residues 535-560 form a disordered region; the sequence is CHDNGESNRRERRDLNEDEHVEEDDG. Positions 537–549 are enriched in basic and acidic residues; that stretch reads DNGESNRRERRDL. A compositionally biased stretch (acidic residues) spans 550–560; the sequence is NEDEHVEEDDG. Asn730 and Asn761 each carry an N-linked (GlcNAc...) asparagine glycan. Asn1039, Asn1049, Asn1111, Asn1163, Asn1217, Asn1325, Asn1349, Asn1492, Asn1576, and Asn1691 each carry an N-linked (GlcNAc...) asparagine glycan. The chain crosses the membrane as a helical span at residues 1776 to 1796; that stretch reads VAGLVALVIVLFVGVISFIVL. Residues 1797-1975 lie on the Cytoplasmic side of the membrane; sequence CCCLKHWNLS…DGDDAVAELI (179 aa). Over residues 1887-1899 the composition is skewed to polar residues; that stretch reads YATIQPRNNQNRL. A disordered region spans residues 1887-1916; it reads YATIQPRNNQNRLTGGGGAGGGSMRSGGGA. Over residues 1900–1916 the composition is skewed to gly residues; it reads TGGGGAGGGSMRSGGGA.

It is found in the cell membrane. Its function is as follows. Cadherins are calcium-dependent cell adhesion proteins. They preferentially interact with themselves in a homophilic manner in connecting cells. The protein is Cadherin-87A (Cad87A) of Drosophila melanogaster (Fruit fly).